The primary structure comprises 250 residues: 5-oxoprolinase subunit A 2 (250 aa).

It belongs to the LamB/PxpA family. In terms of assembly, forms a complex composed of PxpA, PxpB and PxpC.

The enzyme catalyses 5-oxo-L-proline + ATP + 2 H2O = L-glutamate + ADP + phosphate + H(+). Catalyzes the cleavage of 5-oxoproline to form L-glutamate coupled to the hydrolysis of ATP to ADP and inorganic phosphate. The polypeptide is 5-oxoprolinase subunit A 2 (Bordetella bronchiseptica (strain ATCC BAA-588 / NCTC 13252 / RB50) (Alcaligenes bronchisepticus)).